A 143-amino-acid chain; its full sequence is Large ribosomal subunit protein uL13 (143 aa).

Belongs to the universal ribosomal protein uL13 family. As to quaternary structure, part of the 50S ribosomal subunit.

This protein is one of the early assembly proteins of the 50S ribosomal subunit, although it is not seen to bind rRNA by itself. It is important during the early stages of 50S assembly. This chain is Large ribosomal subunit protein uL13, found in Variovorax paradoxus (strain S110).